A 64-amino-acid polypeptide reads, in one-letter code: Large ribosomal subunit protein bL35 (64 aa).

The tract at residues 1 to 56 is disordered; sequence MPKMKSNKSVAARFKLTGSGQLKRTRPGKRHKLSKKSSQEKRNLSKQPLVDKGQVG. The span at 23–35 shows a compositional bias: basic residues; sequence KRTRPGKRHKLSK.

Belongs to the bacterial ribosomal protein bL35 family.

This is Large ribosomal subunit protein bL35 from Chlamydia abortus (strain DSM 27085 / S26/3) (Chlamydophila abortus).